A 409-amino-acid polypeptide reads, in one-letter code: Aspartate aminotransferase, cytoplasmic (409 aa).

Residue Ser-2 is modified to N-acetylserine. Residues Gly-38, Trp-138, and Asn-191 each contribute to the L-aspartate site. Lys-255 bears the N6-(pyridoxal phosphate)lysine mark. Arg-383 contributes to the L-aspartate binding site. A Phosphoserine modification is found at Ser-385.

Belongs to the class-I pyridoxal-phosphate-dependent aminotransferase family. In terms of assembly, homodimer. Requires pyridoxal 5'-phosphate as cofactor.

The protein localises to the cytoplasm. The catalysed reaction is L-aspartate + 2-oxoglutarate = oxaloacetate + L-glutamate. Plays a key role in amino acid metabolism. The protein is Aspartate aminotransferase, cytoplasmic of Schizosaccharomyces pombe (strain 972 / ATCC 24843) (Fission yeast).